The sequence spans 336 residues: N-acetylornithine carbamoyltransferase (336 aa).

Residues 49 to 52 (SMRT), Trp-77, and Arg-112 each bind carbamoyl phosphate. Glu-144 provides a ligand contact to N(2)-acetyl-L-ornithine. 148-151 (HPCQ) serves as a coordination point for carbamoyl phosphate. N(2)-acetyl-L-ornithine is bound by residues Lys-252 and Leu-295. Residue 294 to 295 (CL) coordinates carbamoyl phosphate. An N6-carboxylysine modification is found at Lys-302. Arg-322 provides a ligand contact to carbamoyl phosphate.

The protein belongs to the aspartate/ornithine carbamoyltransferase superfamily. AOTCase family. Homotrimer.

Its subcellular location is the cytoplasm. The catalysed reaction is N(2)-acetyl-L-ornithine + carbamoyl phosphate = N(2)-acetyl-L-citrulline + phosphate + H(+). The protein operates within amino-acid biosynthesis; L-arginine biosynthesis. Carboxylation at Lys-302 increases the catalytic activity of the enzyme. Functionally, catalyzes the transfer of the carbamoyl group from carbamoyl phosphate to the delta-amino group of N(2)-acetyl-L-ornithine to produce N(2)-acetyl-L-citrulline. This is a step in an alternative arginine biosynthesis pathway. The enzyme has no activity with ornithine. This chain is N-acetylornithine carbamoyltransferase, found in Xylella fastidiosa (strain Temecula1 / ATCC 700964).